Reading from the N-terminus, the 273-residue chain is Undecaprenyl-diphosphatase (273 aa).

Transmembrane regions (helical) follow at residues 13-35, 45-62, 82-102, 108-128, 186-206, 219-239, and 250-270; these read GLVE…VFGN, VFEI…VFEY, FVLN…LFDK, LFNP…ILWV, TEFS…YDVL, LILI…KALL, and FAYY…SGWI.

Belongs to the UppP family.

It localises to the cell inner membrane. It carries out the reaction di-trans,octa-cis-undecaprenyl diphosphate + H2O = di-trans,octa-cis-undecaprenyl phosphate + phosphate + H(+). Its function is as follows. Catalyzes the dephosphorylation of undecaprenyl diphosphate (UPP). Confers resistance to bacitracin. The protein is Undecaprenyl-diphosphatase of Neisseria gonorrhoeae (strain ATCC 700825 / FA 1090).